We begin with the raw amino-acid sequence, 292 residues long: Bifunctional protein FolD (292 aa).

Residues 165 to 167 (GRS), Ser-190, and Thr-231 contribute to the NADP(+) site.

This sequence belongs to the tetrahydrofolate dehydrogenase/cyclohydrolase family. In terms of assembly, homodimer.

The enzyme catalyses (6R)-5,10-methylene-5,6,7,8-tetrahydrofolate + NADP(+) = (6R)-5,10-methenyltetrahydrofolate + NADPH. It catalyses the reaction (6R)-5,10-methenyltetrahydrofolate + H2O = (6R)-10-formyltetrahydrofolate + H(+). It participates in one-carbon metabolism; tetrahydrofolate interconversion. Functionally, catalyzes the oxidation of 5,10-methylenetetrahydrofolate to 5,10-methenyltetrahydrofolate and then the hydrolysis of 5,10-methenyltetrahydrofolate to 10-formyltetrahydrofolate. This is Bifunctional protein FolD from Arthrobacter globiformis.